The following is a 480-amino-acid chain: Chromosomal replication initiator protein DnaA (480 aa).

The domain I, interacts with DnaA modulators stretch occupies residues 1–71; that stretch reads MKEFWQTCVS…EALAAEWYQR (71 aa). A domain II region spans residues 71–142; sequence RPVQVTFELP…DAANIVYERS (72 aa). The segment at 143 to 359 is domain III, AAA+ region; sequence RLNTDLTFEN…GALRKVLAYA (217 aa). ATP contacts are provided by Gly-187, Gly-189, Lys-190, and Thr-191. The segment at 360 to 480 is domain IV, binds dsDNA; it reads RFHGRDVLTV…LHVLEQTLKG (121 aa).

This sequence belongs to the DnaA family. As to quaternary structure, oligomerizes as a right-handed, spiral filament on DNA at oriC.

The protein resides in the cytoplasm. Functionally, plays an essential role in the initiation and regulation of chromosomal replication. ATP-DnaA binds to the origin of replication (oriC) to initiate formation of the DNA replication initiation complex once per cell cycle. Binds the DnaA box (a 9 base pair repeat at the origin) and separates the double-stranded (ds)DNA. Forms a right-handed helical filament on oriC DNA; dsDNA binds to the exterior of the filament while single-stranded (ss)DNA is stabiized in the filament's interior. The ATP-DnaA-oriC complex binds and stabilizes one strand of the AT-rich DNA unwinding element (DUE), permitting loading of DNA polymerase. After initiation quickly degrades to an ADP-DnaA complex that is not apt for DNA replication. Binds acidic phospholipids. The polypeptide is Chromosomal replication initiator protein DnaA (Bordetella bronchiseptica (strain ATCC BAA-588 / NCTC 13252 / RB50) (Alcaligenes bronchisepticus)).